Here is a 285-residue protein sequence, read N- to C-terminus: Iron uptake system component EfeM (285 aa).

The N-terminal stretch at 1 to 34 (MTYPLLTRKTLMKKTPLALLLTLGLLQTPLAAFA) is a signal peptide.

Belongs to the EfeM/EfeO family. As to quaternary structure, component of the iron transporter efeUOB/M complex composed of EfeU, EfeM and EfeB.

The protein localises to the periplasm. In terms of biological role, part of the iron transporter system efeUOB/M involved in iron import. Specifically binds Fe(3+), which is produced by EfeB-mediated oxidation of Fe(2+), and delivers it to the cell inner membrane permease EfeU. Also binds Zn(2+) and Cu(2+) in vitro. The sequence is that of Iron uptake system component EfeM from Pseudomonas syringae pv. syringae (strain B728a).